The primary structure comprises 206 residues: NADH-quinone oxidoreductase subunit C (206 aa).

Belongs to the complex I 30 kDa subunit family. In terms of assembly, NDH-1 is composed of 14 different subunits. Subunits NuoB, C, D, E, F, and G constitute the peripheral sector of the complex.

It is found in the cell inner membrane. It carries out the reaction a quinone + NADH + 5 H(+)(in) = a quinol + NAD(+) + 4 H(+)(out). Functionally, NDH-1 shuttles electrons from NADH, via FMN and iron-sulfur (Fe-S) centers, to quinones in the respiratory chain. The immediate electron acceptor for the enzyme in this species is believed to be ubiquinone. Couples the redox reaction to proton translocation (for every two electrons transferred, four hydrogen ions are translocated across the cytoplasmic membrane), and thus conserves the redox energy in a proton gradient. The protein is NADH-quinone oxidoreductase subunit C of Nitrosomonas europaea (strain ATCC 19718 / CIP 103999 / KCTC 2705 / NBRC 14298).